The following is a 635-amino-acid chain: Phosphomethylpyrimidine synthase (635 aa).

Polar residues predominate over residues 1–14 (MNATVSSAVQSSLP). A disordered region spans residues 1–41 (MNATVSSAVQSSLPFSGKTAQVDEGTVKPLPRSQKTYLSGS). Substrate-binding positions include Asn-240, Met-269, Tyr-298, His-334, 354 to 356 (SRG), 395 to 398 (DGLR), and Glu-434. His-438 serves as a coordination point for Zn(2+). Tyr-461 is a binding site for substrate. Residue His-502 coordinates Zn(2+). Residues Cys-582, Cys-585, and Cys-590 each contribute to the [4Fe-4S] cluster site.

It belongs to the ThiC family. Homodimer. [4Fe-4S] cluster is required as a cofactor.

The catalysed reaction is 5-amino-1-(5-phospho-beta-D-ribosyl)imidazole + S-adenosyl-L-methionine = 4-amino-2-methyl-5-(phosphooxymethyl)pyrimidine + CO + 5'-deoxyadenosine + formate + L-methionine + 3 H(+). Its pathway is cofactor biosynthesis; thiamine diphosphate biosynthesis. In terms of biological role, catalyzes the synthesis of the hydroxymethylpyrimidine phosphate (HMP-P) moiety of thiamine from aminoimidazole ribotide (AIR) in a radical S-adenosyl-L-methionine (SAM)-dependent reaction. This chain is Phosphomethylpyrimidine synthase, found in Nitrosospira multiformis (strain ATCC 25196 / NCIMB 11849 / C 71).